The following is a 176-amino-acid chain: Centromere protein R (176 aa).

A Glycyl lysine isopeptide (Lys-Gly) (interchain with G-Cter in SUMO2) cross-link involves residue Lys-8. Phosphoserine is present on Ser-17. Residues 20–50 (PSKIVRKKSITAYSPTTGTYQLSPFSSPATP) form a DD1 region. Lys-22 participates in a covalent cross-link: Glycyl lysine isopeptide (Lys-Gly) (interchain with G-Cter in SUMO2). Ser-28 bears the Phosphoserine mark. Residues 34 to 48 (PTTGTYQLSPFSSPA) are compositionally biased toward polar residues. Residues 34-78 (PTTGTYQLSPFSSPATPKEQEHRNGPSNETRKRSNLSSPVRQEST) are disordered. Positions 51 to 65 (KEQEHRNGPSNETRK) are enriched in basic and acidic residues. The short motif at 63–66 (TRKR) is the Nuclear localization signal element. At Ser-71 the chain carries Phosphoserine. A coiled-coil region spans residues 82 to 112 (RDGFMVLLSKIEISSEKTMEIMKNLSSIQAL). The short motif at 171–175 (LKAIL) is the LXXIL motif element.

As to quaternary structure, homodimer; mediated by the coiled coil domain. Interacts with CCNA2 and MTA1. Interacts with NFKB1 NF-kappa-B subunit. Component of the CENPA-CAD complex, composed of CENPI, CENPK, CENPL, CENPO, CENPP, CENPQ, CENPR and CENPS. The CENPA-CAD complex interacts with the CENPA-NAC complex, at least composed of CENPA, CENPC, CENPH, CENPM, CENPN, CENPT and CENPU. Interacts with TASOR. In terms of tissue distribution, expressed in the spermatogonia and spermatocytes.

It localises to the nucleus. The protein resides in the chromosome. The protein localises to the centromere. It is found in the kinetochore. Its function is as follows. Transcription coregulator that can have both coactivator and corepressor functions. Involved in the coactivation of nuclear receptors for retinoid X (RXRs) and thyroid hormone (TRs) in a ligand-dependent fashion. In contrast, it does not coactivate nuclear receptors for retinoic acid, vitamin D, progesterone receptor, nor glucocorticoid. Acts as a coactivator for estrogen receptor alpha. Acts as a transcriptional corepressor via its interaction with the NFKB1 NF-kappa-B subunit, possibly by interfering with the transactivation domain of NFKB1. Induces apoptosis in breast cancer cells, but not in other cancer cells, via a caspase-2 mediated pathway that involves mitochondrial membrane permeabilization but does not require other caspases. May also act as an inhibitor of cyclin A-associated kinase. Also acts a component of the CENPA-CAD (nucleosome distal) complex, a complex recruited to centromeres which is involved in assembly of kinetochore proteins, mitotic progression and chromosome segregation. May be involved in incorporation of newly synthesized CENPA into centromeres via its interaction with the CENPA-NAC complex. The polypeptide is Centromere protein R (Itgb3bp) (Mus musculus (Mouse)).